The chain runs to 496 residues: Cytochrome P450 4ae1 (496 aa).

C443 is a binding site for heme.

It belongs to the cytochrome P450 family. Heme is required as a cofactor.

It is found in the endoplasmic reticulum membrane. The protein resides in the microsome membrane. May be involved in the metabolism of insect hormones and in the breakdown of synthetic insecticides. In Drosophila melanogaster (Fruit fly), this protein is Cytochrome P450 4ae1 (Cyp4ae1).